A 189-amino-acid chain; its full sequence is Glucose-6-phosphate isomerase (189 aa).

4 residues coordinate Fe cation: histidine 88, histidine 90, glutamate 97, and histidine 136.

Belongs to the archaeal-type GPI family. As to quaternary structure, homodimer.

The protein resides in the cytoplasm. It catalyses the reaction alpha-D-glucose 6-phosphate = beta-D-fructose 6-phosphate. The protein operates within carbohydrate degradation; glycolysis; D-glyceraldehyde 3-phosphate and glycerone phosphate from D-glucose: step 2/4. This chain is Glucose-6-phosphate isomerase, found in Thermococcus onnurineus (strain NA1).